Reading from the N-terminus, the 147-residue chain is Small ribosomal subunit protein uS12 (147 aa).

This sequence belongs to the universal ribosomal protein uS12 family. As to quaternary structure, part of the 30S ribosomal subunit.

With S4 and S5 plays an important role in translational accuracy. Located at the interface of the 30S and 50S subunits. The polypeptide is Small ribosomal subunit protein uS12 (Sulfurisphaera tokodaii (strain DSM 16993 / JCM 10545 / NBRC 100140 / 7) (Sulfolobus tokodaii)).